The primary structure comprises 103 residues: Small ribosomal subunit protein uS10 (103 aa).

This sequence belongs to the universal ribosomal protein uS10 family. As to quaternary structure, part of the 30S ribosomal subunit.

In terms of biological role, involved in the binding of tRNA to the ribosomes. This Shewanella frigidimarina (strain NCIMB 400) protein is Small ribosomal subunit protein uS10.